A 365-amino-acid polypeptide reads, in one-letter code: IgG receptor FcRn large subunit p51 (365 aa).

The signal sequence occupies residues 1-23; that stretch reads MGVPRPQPWALGLLLFLLPGSLG. Residues 24–110 are alpha-1; sequence AESHLSLLYH…AFKALGGKGP (87 aa). Topologically, residues 24–297 are extracellular; the sequence is AESHLSLLYH…VELESPAKSS (274 aa). The segment at 111 to 200 is alpha-2; the sequence is YTLQGLLGCE…ERGRGNLEWK (90 aa). 2 disulfides stabilise this stretch: C119–C182 and C221–C275. The N-linked (GlcNAc...) asparagine glycan is linked to N125. Residues 201-290 form an alpha-3 region; sequence EPPSMRLKAR…GLAQPLRVEL (90 aa). The Ig-like C1-type domain maps to 202 to 289; sequence PPSMRLKARP…AGLAQPLRVE (88 aa). The segment at 291-297 is connecting peptide; that stretch reads ESPAKSS. Residues 298–321 traverse the membrane as a helical segment; it reads VLVVGIVIGVLLLTAAAVGGALLW. The Cytoplasmic portion of the chain corresponds to 322–365; the sequence is RRMRSGLPAPWISLRGDDTGVLLPTPGEAQDADLKDVNVIPATA. At S334 the chain carries Phosphoserine.

This sequence belongs to the immunoglobulin superfamily. FcRn complex consists of two subunits: p51, and p14 which is equivalent to beta-2-microglobulin. It forms an MHC class I-like heterodimer. Interacts with albumin/ALB; this interaction regulates ALB homeostasis. In terms of assembly, (Microbial infection) Interacts with Echovirus 6, Echovirus 11 and Echovirus 30 capsid protein VP1. As to expression, expressed in full-term placenta, heart, lung, liver, muscle, kidney, pancreas, and both fetal and adult small intestine.

Its subcellular location is the cell membrane. It is found in the endosome membrane. In terms of biological role, cell surface receptor that transfers passive humoral immunity from the mother to the newborn. Binds to the Fc region of monomeric immunoglobulin gamma and mediates its selective uptake from milk. IgG in the milk is bound at the apical surface of the intestinal epithelium. The resultant FcRn-IgG complexes are transcytosed across the intestinal epithelium and IgG is released from FcRn into blood or tissue fluids. Throughout life, contributes to effective humoral immunity by recycling IgG and extending its half-life in the circulation. Mechanistically, monomeric IgG binding to FcRn in acidic endosomes of endothelial and hematopoietic cells recycles IgG to the cell surface where it is released into the circulation. In addition of IgG, regulates homeostasis of the other most abundant circulating protein albumin/ALB. Functionally, (Microbial infection) Acts as an uncoating receptor for a panel of echoviruses including Echovirus 5, 6, 7, 9, 11, 13, 25 and 29. The sequence is that of IgG receptor FcRn large subunit p51 (FCGRT) from Homo sapiens (Human).